The following is a 976-amino-acid chain: 3-hydroxy-3-methylglutaryl-coenzyme A reductase (976 aa).

Residues 1-36 lie on the Lumenal side of the membrane; sequence MDHEGCQGQHPQQCCQWVSNAWSEFLDLLKNAETLD. Positions 36 to 217 constitute an SSD domain; sequence DIVIMLLGYI…FTFYTAILSI (182 aa). A helical membrane pass occupies residues 37–57; sequence IVIMLLGYIAMHLTFVSLFLS. Topologically, residues 58–64 are cytoplasmic; that stretch reads MRKMGSK. A helical transmembrane segment spans residues 65-85; the sequence is FWLGICTLFSSVFAFLFGLVV. Residues 86–90 lie on the Lumenal side of the membrane; sequence TTKLG. The chain crosses the membrane as a helical span at residues 91–111; it reads VPISVILLSEGLPFLVVTIGF. Topologically, residues 112-169 are cytoplasmic; that stretch reads EKNIVLTRAVMSHAIEHRRIQAQNSKSGKRSPDGSTQNMIQYAVQAAIKEKGFEIIRD. Residues 170-190 traverse the membrane as a helical segment; the sequence is YAIEIVILVIGAASGVQGGLQ. Over 191-193 the chain is Lumenal; the sequence is QFC. Residues 194–214 traverse the membrane as a helical segment; the sequence is FLAAWTLFFDFILLFTFYTAI. Residues 215–272 lie on the Cytoplasmic side of the membrane; it reads LSIKLRSTVSSVMSICVWPLRMMASRRVAENVAKGDDELNRVRGDAPLFGRKSSSIPK. A helical membrane pass occupies residues 273–293; sequence FKVLMILGFIFVNIVNICSIP. At 294 to 401 the chain is on the lumenal side; that stretch reads FRNPSSMSTI…GGILKSLEDP (108 aa). The chain crosses the membrane as a helical span at residues 402 to 422; it reads VLSKWIVIALALSVALNGYLF. The Cytoplasmic portion of the chain corresponds to 423-976; the sequence is NVARWGIKDP…RYSEVKAIDE (554 aa). The active-site Charge relay system is E618. Position 624-630 (624-630) interacts with CoA; sequence SASRGCK. NADP(+) contacts are provided by residues 685–687 and 712–720; these read SRF and DAMGMNMIS. K752 acts as the Charge relay system in catalysis. Residue 781–783 coordinates CoA; the sequence is VLK. The active-site Charge relay system is the D828. CoA is bound at residue 923 to 924; sequence AH. H924 serves as the catalytic Proton donor. Residues 926–954 form a disordered region; it reads QHNRSAAPSRSTTPGSSHDARLTGHDQCP. 928 to 929 is a binding site for NADP(+); it reads NR. Residues 928 to 941 show a composition bias toward polar residues; sequence NRSAAPSRSTTPGS. A compositionally biased stretch (basic and acidic residues) spans 943-953; sequence HDARLTGHDQC.

The protein belongs to the HMG-CoA reductase family.

It localises to the endoplasmic reticulum membrane. The enzyme catalyses (R)-mevalonate + 2 NADP(+) + CoA = (3S)-3-hydroxy-3-methylglutaryl-CoA + 2 NADPH + 2 H(+). The protein operates within metabolic intermediate biosynthesis; (R)-mevalonate biosynthesis; (R)-mevalonate from acetyl-CoA: step 3/3. Its function is as follows. HMG-CoA reductase; part of the first module of ergosterol biosynthesis pathway that includes the early steps of the pathway, conserved across all eukaryotes, and which results in the formation of mevalonate from acetyl-coenzyme A (acetyl-CoA). In this module, the cytosolic acetyl-CoA acetyltransferase catalyzes the formation of acetoacetyl-CoA. The hydroxymethylglutaryl-CoA synthase then condenses acetyl-CoA with acetoacetyl-CoA to form HMG-CoA. The rate-limiting step of the early module is the reduction to mevalonate by the 3-hydroxy-3-methylglutaryl-coenzyme A (HMG-CoA) reductase HMGR. The chain is 3-hydroxy-3-methylglutaryl-coenzyme A reductase from Fusarium fujikuroi (Bakanae and foot rot disease fungus).